Reading from the N-terminus, the 363-residue chain is Pyrimidine monooxygenase RutA (363 aa).

FMN-binding positions include 49-50 (IK), asparagine 115, glutamate 124, 140-141 (RY), and serine 190.

The protein belongs to the NtaA/SnaA/DszA monooxygenase family. RutA subfamily.

The catalysed reaction is uracil + FMNH2 + NADH + O2 = (Z)-3-ureidoacrylate + FMN + NAD(+) + H2O + H(+). It carries out the reaction thymine + FMNH2 + NADH + O2 = (Z)-2-methylureidoacrylate + FMN + NAD(+) + H2O + H(+). In terms of biological role, catalyzes the pyrimidine ring opening between N-3 and C-4 by an unusual flavin hydroperoxide-catalyzed mechanism, adding oxygen atoms in the process to yield ureidoacrylate peracid, that immediately reacts with FMN forming ureidoacrylate and FMN-N(5)-oxide. The FMN-N(5)-oxide reacts spontaneously with NADH to produce FMN. Requires the flavin reductase RutF to regenerate FMN in vivo. This Escherichia coli O44:H18 (strain 042 / EAEC) protein is Pyrimidine monooxygenase RutA.